The chain runs to 89 residues: Small ribosomal subunit protein uS15 (89 aa).

Belongs to the universal ribosomal protein uS15 family. As to quaternary structure, part of the 30S ribosomal subunit. Forms a bridge to the 50S subunit in the 70S ribosome, contacting the 23S rRNA.

Its function is as follows. One of the primary rRNA binding proteins, it binds directly to 16S rRNA where it helps nucleate assembly of the platform of the 30S subunit by binding and bridging several RNA helices of the 16S rRNA. Functionally, forms an intersubunit bridge (bridge B4) with the 23S rRNA of the 50S subunit in the ribosome. The protein is Small ribosomal subunit protein uS15 of Desulforapulum autotrophicum (strain ATCC 43914 / DSM 3382 / VKM B-1955 / HRM2) (Desulfobacterium autotrophicum).